The following is a 518-amino-acid chain: Sugar transport protein MST3 (518 aa).

Residues 1 to 18 are Cytoplasmic-facing; sequence MAGGAVVSTGAGKDYPGK. A helical transmembrane segment spans residues 19–39; it reads LTLFVFFTCVVAATGGLIFGY. The Extracellular portion of the chain corresponds to 40 to 80; the sequence is DIGISGGVTSMDPFLRKFFPEVYRKKQMADKNNQYCKYDNQ. A helical membrane pass occupies residues 81–101; it reads LLQTFTSSLYLAALVSSFFAA. At 102 to 117 the chain is on the cytoplasmic side; sequence TVTRVLGRKWSMFAGG. Residues 118-138 traverse the membrane as a helical segment; that stretch reads LTFLIGAALNGAAENVAMLIV. Residues 139–140 lie on the Extracellular side of the membrane; the sequence is GR. The helical transmembrane segment at 141 to 161 threads the bilayer; it reads ILLGVGVGFANQSVPVYLSEM. Over 162–167 the chain is Cytoplasmic; sequence APARLR. Residues 168–188 traverse the membrane as a helical segment; the sequence is GMLNIGFQLMITIGILAAELI. Over 189–202 the chain is Extracellular; the sequence is NYGTAKIKAGWGWR. The chain crosses the membrane as a helical span at residues 203 to 223; the sequence is VSLALAAVPAAIITLGSLFLP. Over 224–290 the chain is Cytoplasmic; sequence DTPNSLIDRG…YRAQLTMAIC (67 aa). Residues 291 to 311 form a helical membrane-spanning segment; the sequence is IPFFQQLTGINVIMFYAPVLF. The Extracellular segment spans residues 312–322; it reads DTLGFKSDASL. The helical transmembrane segment at 323 to 343 threads the bilayer; that stretch reads MSAVITGLVNVFATLVSIFTV. The Cytoplasmic segment spans residues 344 to 351; that stretch reads DRLGRRKL. The helical transmembrane segment at 352-372 threads the bilayer; that stretch reads FLQGGAQMVVCQVVVGTLIAV. Topologically, residues 373–387 are extracellular; sequence KFGTSGIGDIPKGYA. A helical transmembrane segment spans residues 388 to 408; it reads AVVVLFICMYVAGFAWSWGPL. Over 409 to 427 the chain is Cytoplasmic; it reads GWLVPSEIFPLEIRPAGQS. Residues 428 to 448 traverse the membrane as a helical segment; the sequence is INVSVNMLFTFVIAQAFLTML. Residues 449–452 are Extracellular-facing; sequence CHMK. Residues 453–473 traverse the membrane as a helical segment; sequence FGLFYFFAGWVVIMTVFIALF. Residues 474 to 518 lie on the Cytoplasmic side of the membrane; sequence LPETKNVPIEEMVLVWKSHWFWRRFIGDHDVHVGANHVSNNKLQP.

It belongs to the major facilitator superfamily. Sugar transporter (TC 2.A.1.1) family. Highly expressed in roots. Expressed in xylem and sclerenchyma cells of roots. Expressed at low levels in leaves.

It is found in the membrane. Functionally, mediates active uptake of hexoses by sugar:proton symport. Can transport glucose, xylose and 3-O-methylglucose. May be involved in the accumulation of monosaccharides required for cell wall synthesis during root development. This chain is Sugar transport protein MST3, found in Oryza sativa subsp. japonica (Rice).